The following is a 226-amino-acid chain: DNA mismatch repair protein MutH (226 aa).

It belongs to the MutH family.

It localises to the cytoplasm. Its function is as follows. Sequence-specific endonuclease that cleaves unmethylated GATC sequences. It is involved in DNA mismatch repair. The protein is DNA mismatch repair protein MutH of Vibrio campbellii (strain ATCC BAA-1116).